The sequence spans 557 residues: Membrane protein insertase YidC (557 aa).

Transmembrane regions (helical) follow at residues 6–26 (TILW…WQVH), 219–239 (IGPF…IYTD), 367–387 (IVGN…LAFF), 437–457 (LGGC…YWVL), and 514–534 (MPIV…LYWV).

This sequence belongs to the OXA1/ALB3/YidC family. Type 1 subfamily. As to quaternary structure, interacts with the Sec translocase complex via SecD. Specifically interacts with transmembrane segments of nascent integral membrane proteins during membrane integration.

The protein localises to the cell inner membrane. Functionally, required for the insertion and/or proper folding and/or complex formation of integral membrane proteins into the membrane. Involved in integration of membrane proteins that insert both dependently and independently of the Sec translocase complex, as well as at least some lipoproteins. Aids folding of multispanning membrane proteins. This Polynucleobacter asymbioticus (strain DSM 18221 / CIP 109841 / QLW-P1DMWA-1) (Polynucleobacter necessarius subsp. asymbioticus) protein is Membrane protein insertase YidC.